Here is a 120-residue protein sequence, read N- to C-terminus: Large ribosomal subunit protein bL20 (120 aa).

It belongs to the bacterial ribosomal protein bL20 family.

Its function is as follows. Binds directly to 23S ribosomal RNA and is necessary for the in vitro assembly process of the 50S ribosomal subunit. It is not involved in the protein synthesizing functions of that subunit. This Baumannia cicadellinicola subsp. Homalodisca coagulata protein is Large ribosomal subunit protein bL20.